A 511-amino-acid chain; its full sequence is Phenylalanine--tRNA ligase alpha subunit (511 aa).

Residues Thr352, 390–392 (QVE), Tyr429, and Phe455 each bind L-phenylalanine.

The protein belongs to the class-II aminoacyl-tRNA synthetase family. Phe-tRNA synthetase alpha subunit type 2 subfamily. Tetramer of two alpha and two beta subunits. Mg(2+) is required as a cofactor.

It is found in the cytoplasm. It catalyses the reaction tRNA(Phe) + L-phenylalanine + ATP = L-phenylalanyl-tRNA(Phe) + AMP + diphosphate + H(+). The polypeptide is Phenylalanine--tRNA ligase alpha subunit (Methanothermobacter thermautotrophicus (strain ATCC 29096 / DSM 1053 / JCM 10044 / NBRC 100330 / Delta H) (Methanobacterium thermoautotrophicum)).